We begin with the raw amino-acid sequence, 263 residues long: Undecaprenyl-diphosphatase (263 aa).

A run of 6 helical transmembrane segments spans residues 40–60 (PGVLFDVLLHAGTMAAVLVYF), 87–107 (LLIIATVPTAIIGLSFKDFFV), 109–129 (AFHNLPLISLMLVVTGGLLFF), 186–206 (FSFLMALPAVFGATLVSLLEW), 219–239 (AGAVMAFLSGLASIHLLMGVV), and 243–263 (RLYAFAVYCWLMGGMFFAISS).

The protein belongs to the UppP family.

It localises to the cell inner membrane. The catalysed reaction is di-trans,octa-cis-undecaprenyl diphosphate + H2O = di-trans,octa-cis-undecaprenyl phosphate + phosphate + H(+). Its function is as follows. Catalyzes the dephosphorylation of undecaprenyl diphosphate (UPP). Confers resistance to bacitracin. This is Undecaprenyl-diphosphatase from Syntrophotalea carbinolica (strain DSM 2380 / NBRC 103641 / GraBd1) (Pelobacter carbinolicus).